The following is a 561-amino-acid chain: Arginine--tRNA ligase (561 aa).

Residues 129-139 carry the 'HIGH' region motif; the sequence is ANPTGPLHVGH.

It belongs to the class-I aminoacyl-tRNA synthetase family. Monomer.

Its subcellular location is the cytoplasm. It catalyses the reaction tRNA(Arg) + L-arginine + ATP = L-arginyl-tRNA(Arg) + AMP + diphosphate. The polypeptide is Arginine--tRNA ligase (Bordetella parapertussis (strain 12822 / ATCC BAA-587 / NCTC 13253)).